A 348-amino-acid polypeptide reads, in one-letter code: Dihydroorotase (348 aa).

Zn(2+) is bound by residues histidine 17 and histidine 19. Residues 19 to 21 (HLR) and asparagine 45 each bind substrate. Positions 103, 140, and 178 each coordinate Zn(2+). At lysine 103 the chain carries N6-carboxylysine. Histidine 140 contributes to the substrate binding site. Substrate is bound at residue leucine 223. Zn(2+) is bound at residue aspartate 251. Residue aspartate 251 is part of the active site. The substrate site is built by histidine 255 and alanine 267.

It belongs to the metallo-dependent hydrolases superfamily. DHOase family. Class II DHOase subfamily. As to quaternary structure, homodimer. Zn(2+) serves as cofactor.

The catalysed reaction is (S)-dihydroorotate + H2O = N-carbamoyl-L-aspartate + H(+). It participates in pyrimidine metabolism; UMP biosynthesis via de novo pathway; (S)-dihydroorotate from bicarbonate: step 3/3. Catalyzes the reversible cyclization of carbamoyl aspartate to dihydroorotate. In Escherichia coli O17:K52:H18 (strain UMN026 / ExPEC), this protein is Dihydroorotase.